The sequence spans 106 residues: U1-lycotoxin-Ls1z (106 aa).

Positions 1 to 19 (MKVLVVVALLVTLISYSSS) are cleaved as a signal peptide. The propeptide occupies 20-40 (EGIDDLEADELLSLMANEQTR). 4 disulfides stabilise this stretch: C43/C58, C50/C67, C57/C85, and C69/C83.

It belongs to the neurotoxin 19 (CSTX) family. 03 subfamily. In terms of tissue distribution, expressed by the venom gland.

The protein resides in the secreted. This chain is U1-lycotoxin-Ls1z, found in Lycosa singoriensis (Wolf spider).